The following is a 392-amino-acid chain: Selenide, water dikinase 1 (392 aa).

Residue Cys31 is part of the active site. Residues Lys32, Gly67 to Asp69, Asp87, Asp110, and Gly161 to Thr164 contribute to the ATP site. Position 69 (Asp69) interacts with Mg(2+). Residue Asp110 participates in Mg(2+) binding. Asp265 is a Mg(2+) binding site. Thr387 is subject to Phosphothreonine.

This sequence belongs to the selenophosphate synthase 1 family. Class II subfamily. In terms of assembly, homodimer. It depends on Mg(2+) as a cofactor.

Its subcellular location is the cell membrane. The protein localises to the nucleus membrane. It catalyses the reaction hydrogenselenide + ATP + H2O = selenophosphate + AMP + phosphate + 2 H(+). In terms of biological role, synthesizes selenophosphate from selenide and ATP. This chain is Selenide, water dikinase 1 (sephs1), found in Danio rerio (Zebrafish).